The following is a 213-amino-acid chain: Carboxysome shell protein CcmP (213 aa).

2 BMC circularly permuted domains span residues 4–106 (ELRS…RLKP) and 107–211 (KIVS…GDRS). A Probably important for pore gating motif is present at residues 69–70 (ER).

The protein belongs to the EutL/PduB family. A dimer of stacked trimers, the same faces interact.

The protein localises to the carboxysome. Functionally, probably part of the carboxysome shell, a polyhedral inclusion where RuBisCO (ribulose bisphosphate carboxylase, rbcL-rbcS) is sequestered. It is thought that this protein controls transport of RuBisCO reactants in and out of the carboxysome; residual densities in the 4 X-ray structures suggest that differing compounds bind in interior pockets, depending on the open or closed state of the pore. The polypeptide is Carboxysome shell protein CcmP (Synechococcus elongatus (strain ATCC 33912 / PCC 7942 / FACHB-805) (Anacystis nidulans R2)).